The primary structure comprises 598 residues: Arylsulfate sulfotransferase AssT (598 aa).

The first 27 residues, 1 to 27 (MFHPYRKTLLSGTVALALGLFATGAIA), serve as a signal peptide directing secretion. Residues histidine 279 and histidine 383 each coordinate 4-methylumbelliferone. An intrachain disulfide couples cysteine 445 to cysteine 451. Histidine 463 contributes to the 4-methylumbelliferone binding site. Histidine 463 serves as the catalytic Nucleophile; sulfurylated histidine covalent intermediate.

The protein belongs to the aryl sulfotransferase family. Monomer.

It localises to the periplasm. It carries out the reaction an aryl sulfate + a phenol = an aryl sulfate + a phenol. The catalysed reaction is 4-methylumbelliferone sulfate + phenol = phenyl sulfate + 4-methylumbelliferone. It catalyses the reaction 2-naphthyl sulfate + phenol = phenyl sulfate + 2-naphthol. Functionally, catalyzes the transfer of a sulfate group from a phenyl sulfate ester to other phenolic compounds. Is able to use several substrate donors and acceptors in vitro: using phenol as an acceptor substrate, 4-methylumbelliferyl sulfate is the best donor substrate, followed by beta-naphthyl sulfate, p-nitrophenyl sulfate (PNS), and alpha-naphthyl sulfate; using PNS as a donor substrate, alpha-naphthol is the best acceptor substrate, followed by phenol, resorcinol, p-acetaminophen, tyramine, and tyrosine. Cannot use 3'-phosphoadenosine-5'-phophosulfate (PAPS), the donor substrate of mammalian sulfotransferase. May be a detoxifying enzyme, converting toxic phenolic compounds into non-toxic materials. The protein is Arylsulfate sulfotransferase AssT of Lelliottia amnigena (Enterobacter amnigenus).